Here is a 293-residue protein sequence, read N- to C-terminus: ATP synthase subunit a (293 aa).

The next 6 helical transmembrane spans lie at 40–60, 98–118, 151–171, 188–208, 225–245, and 264–284; these read DSLFWSGLMGLIVIFCLWLAA, FVAPLALTVFLWIILMNALDL, DLNVPMGMSLGVLLLMFYYGI, FHAHGLAALVLAPFNLLLNLI, MFAGELIFMLIALLGGAWTGF, and AIFHILIVLLQAFIFMMLTLV.

It belongs to the ATPase A chain family. F-type ATPases have 2 components, CF(1) - the catalytic core - and CF(0) - the membrane proton channel. CF(1) has five subunits: alpha(3), beta(3), gamma(1), delta(1), epsilon(1). CF(0) has three main subunits: a(1), b(2) and c(9-12). The alpha and beta chains form an alternating ring which encloses part of the gamma chain. CF(1) is attached to CF(0) by a central stalk formed by the gamma and epsilon chains, while a peripheral stalk is formed by the delta and b chains.

The protein localises to the cell inner membrane. Its function is as follows. Key component of the proton channel; it plays a direct role in the translocation of protons across the membrane. The chain is ATP synthase subunit a from Bordetella avium (strain 197N).